Consider the following 293-residue polypeptide: Urease accessory protein UreD (293 aa).

Belongs to the UreD family. As to quaternary structure, ureD, UreF and UreG form a complex that acts as a GTP-hydrolysis-dependent molecular chaperone, activating the urease apoprotein by helping to assemble the nickel containing metallocenter of UreC. The UreE protein probably delivers the nickel.

Its subcellular location is the cytoplasm. Functionally, required for maturation of urease via the functional incorporation of the urease nickel metallocenter. This chain is Urease accessory protein UreD, found in Arthrobacter sp. (strain FB24).